A 259-amino-acid chain; its full sequence is Putative cysteine-rich repeat secretory protein 25 (259 aa).

The N-terminal stretch at 1–31 is a signal peptide; it reads MSSSFLSRPLVSVYVFAMVTMQLLFMQSVLS. 2 consecutive Gnk2-homologous domains span residues 37–138 and 144–256; these read AYLN…SIYT and YRHI…LYPF.

This sequence belongs to the cysteine-rich repeat secretory protein family.

It localises to the secreted. This Arabidopsis thaliana (Mouse-ear cress) protein is Putative cysteine-rich repeat secretory protein 25 (CRRSP25).